The primary structure comprises 246 residues: 14-3-3 protein eta (246 aa).

Gly-2 carries the N-acetylglycine modification. Phosphoserine occurs at positions 25 and 59.

The protein belongs to the 14-3-3 family. In terms of assembly, homodimer. Interacts with many nuclear hormone receptors and cofactors including AR, ESR1, ESR2, MC2R, NR3C1, NRIP1, PPARBP and THRA. Interacts with ABL1 (phosphorylated form); the interaction retains it in the cytoplasm. Interacts with ARHGEF28 and CDK16. Weakly interacts with CDKN1B. Interacts with GAB2. Interacts with KCNK18 in a phosphorylation-dependent manner. Interacts with SAMSN1. Interacts with the 'Ser-241' phosphorylated form of PDPK1. Interacts with the 'Thr-369' phosphorylated form of DAPK2. Interacts with PI4KB, TBC1D22A and TBC1D22B. Interacts with SLITRK1. Interacts with MEFV. Post-translationally, phosphorylated on Ser-59 by protein kinase C delta type catalytic subunit in a sphingosine-dependent fashion. As to expression, expressed mainly in the brain and present in other tissues albeit at lower levels.

Its function is as follows. Adapter protein implicated in the regulation of a large spectrum of both general and specialized signaling pathways. Binds to a large number of partners, usually by recognition of a phosphoserine or phosphothreonine motif. Binding generally results in the modulation of the activity of the binding partner. Negatively regulates the kinase activity of PDPK1. This Homo sapiens (Human) protein is 14-3-3 protein eta (YWHAH).